A 214-amino-acid chain; its full sequence is tRNA (guanine-N(7)-)-methyltransferase (214 aa).

The S-adenosyl-L-methionine site is built by Glu-44, Glu-69, Asp-96, and Asp-118. The active site involves Asp-118. Substrate contacts are provided by residues Lys-122, Asp-154, and Thr-191 to Glu-194.

The protein belongs to the class I-like SAM-binding methyltransferase superfamily. TrmB family.

The enzyme catalyses guanosine(46) in tRNA + S-adenosyl-L-methionine = N(7)-methylguanosine(46) in tRNA + S-adenosyl-L-homocysteine. The protein operates within tRNA modification; N(7)-methylguanine-tRNA biosynthesis. Its function is as follows. Catalyzes the formation of N(7)-methylguanine at position 46 (m7G46) in tRNA. This Listeria monocytogenes serotype 4a (strain HCC23) protein is tRNA (guanine-N(7)-)-methyltransferase.